We begin with the raw amino-acid sequence, 199 residues long: Large ribosomal subunit protein bL25 (199 aa).

It belongs to the bacterial ribosomal protein bL25 family. CTC subfamily. As to quaternary structure, part of the 50S ribosomal subunit; part of the 5S rRNA/L5/L18/L25 subcomplex. Contacts the 5S rRNA. Binds to the 5S rRNA independently of L5 and L18.

Its function is as follows. This is one of the proteins that binds to the 5S RNA in the ribosome where it forms part of the central protuberance. This chain is Large ribosomal subunit protein bL25, found in Pseudomonas fluorescens (strain ATCC BAA-477 / NRRL B-23932 / Pf-5).